The chain runs to 320 residues: Beta-carotene ketolase (320 aa).

It carries out the reaction all-trans-beta-carotene + 2 AH2 + 2 O2 = echinenone + 2 A + 3 H2O. The enzyme catalyses echinenone + 2 AH2 + 2 O2 = canthaxanthin + 2 A + 3 H2O. It functions in the pathway carotenoid biosynthesis; astaxanthin biosynthesis. Functionally, converts beta-carotene to canthaxanthin via echinenone. The chain is Beta-carotene ketolase from Haematococcus lacustris (Green alga).